The chain runs to 267 residues: MQPESAMTPALEVTVLVSIGRHPLTGRVRRADQDARGVELARSLADAEVRLLHAGECNESSEAALRGYLGMGFSELALIEQPEGADVLPALAEALDATSPHLVITGERAERGEGSGLLPYLLAERLGWPLVSGLAAVESVEDGMATLLQALPRGQRRRLKIRLPAIVTVDDAAPTPRQSAYGPARRGTLESSAGEVCNDDEWATWQVQPARPRPKRLKIVKAASARDRFKAAAAKAEGTGGQVLTDVTPTQGAEAILTLLRDEEVLR.

This sequence belongs to the ETF beta-subunit/FixA family. Heterodimer of an alpha and a beta subunit.

Functionally, participates in the electron transfer process during N,N-dimethylglycine (DMG) degradation to sarcosine. The polypeptide is Electron transfer flavoprotein subunit beta (Chromohalobacter salexigens (strain ATCC BAA-138 / DSM 3043 / CIP 106854 / NCIMB 13768 / 1H11)).